The following is a 586-amino-acid chain: Phosphatidylinositol-3-phosphatase SAC1-A (586 aa).

Topologically, residues 1-519 are cytoplasmic; the sequence is MANAYERFNL…TPLHVKKDWK (519 aa). The SAC domain maps to 121–450; sequence INNVLNTDGF…ANACAKQYAG (330 aa). The tract at residues 451 to 586 is essential for phosphatidylinositol-4-phosphate phosphatase activity; the sequence is TGALKTDFTR…PKLVQKEKMD (136 aa). Residues 520–540 form a helical membrane-spanning segment; sequence FLLLPVIMVVAFSMCIICLLM. The Lumenal portion of the chain corresponds to 541–547; sequence AGDTWTE. The chain crosses the membrane as a helical span at residues 548–568; that stretch reads TLAYVLFWGMASALTAAVIVV. Over 569–586 the chain is Cytoplasmic; it reads NGREFVDAPKLVQKEKMD.

The protein resides in the endoplasmic reticulum membrane. The protein localises to the golgi apparatus membrane. The enzyme catalyses a 1,2-diacyl-sn-glycero-3-phospho-(1D-myo-inositol-3-phosphate) + H2O = a 1,2-diacyl-sn-glycero-3-phospho-(1D-myo-inositol) + phosphate. The catalysed reaction is a 1,2-diacyl-sn-glycero-3-phospho-(1D-myo-inositol 4-phosphate) + H2O = a 1,2-diacyl-sn-glycero-3-phospho-(1D-myo-inositol) + phosphate. Phosphoinositide phosphatase which catalyzes the hydrolysis of phosphatidylinositol 4-phosphate (PtdIns(4)P), phosphatidylinositol 3-phosphate (PtdIns(3)P) and has low activity towards phosphatidylinositol-3,5-bisphosphate (PtdIns(3,5)P2). This chain is Phosphatidylinositol-3-phosphatase SAC1-A (sacm1la), found in Danio rerio (Zebrafish).